We begin with the raw amino-acid sequence, 657 residues long: Serine/threonine kinase NLK (657 aa).

Positions 208 to 554 (SQPDRPIGYG…VEEALSHPYL (347 aa)) constitute a Protein kinase domain. Residues 214-222 (IGYGAFGVV) and lysine 237 each bind ATP. The active-site Proton acceptor is the aspartate 391.

The protein belongs to the protein kinase superfamily. Ser/Thr protein kinase family. Component of the beta-catenin-lit-1 complex (also called the lit-1/wrm-1 complex or the wrm-1/lit-1 kinase complex) at least composed of lit-1 and wrm-1. Interacts with wrm-1 (via N-terminus); the interaction is direct and activates lit-1 kinase activity which leads to the phosphorylation of pop-1. This promotes pop-1 interaction with par-5 and translocation of pop-1 from the nucleus to the cytoplasm. Interacts with pop-1 (when phosphorylated on 'Ser-125'); the interaction is dependent on the beta-catenin-lit-1 complex. The cofactor is Mg(2+).

It localises to the cytoplasm. Its subcellular location is the cell cortex. It is found in the nucleus. The enzyme catalyses L-seryl-[protein] + ATP = O-phospho-L-seryl-[protein] + ADP + H(+). The catalysed reaction is L-threonyl-[protein] + ATP = O-phospho-L-threonyl-[protein] + ADP + H(+). Its function is as follows. Has a role in the Wnt signaling pathway controlling the asymmetry of cell divisions during embryogenesis. Operates in the AB and EMS cell lineages influencing cell specification. Required for body wall muscle development, endoderm development, pop-1 asymmetry and T-cell division asymmetry. Component of the beta-catenin-lit-1 complex which promotes the phosphorylation, down-regulation and subcellular relocation of pop-1. Regulates plp-1 nuclear localization in embryos. Plays a role in male tail tip morphogenesis. The protein is Serine/threonine kinase NLK of Caenorhabditis briggsae.